A 428-amino-acid chain; its full sequence is Divergent protein kinase domain 1A (428 aa).

Residues 1–27 (MARSLCAGAWLRKPHYLQARLSYMRVK) are Cytoplasmic-facing. The helical transmembrane segment at 28-48 (YLFFSWLVVFVGSWIIYVQYS) threads the bilayer. Over 49-428 (TYTELCRGKD…WKKISYTNDS (380 aa)) the chain is Lumenal.

The protein belongs to the DIPK family. Post-translationally, among the many cysteines in the lumenal domain, most are probably involved in disulfide bonds. In terms of tissue distribution, ubiquitous.

Its subcellular location is the endoplasmic reticulum membrane. The chain is Divergent protein kinase domain 1A (Dipk1a) from Mus musculus (Mouse).